We begin with the raw amino-acid sequence, 72 residues long: MSKDDCIEFEGTVSETLPNTTFRIKLESGHEVTAHISGRMRKNYIRILTGDRVKIEMTAYDLTKGRIIYRMK.

One can recognise an S1-like domain in the interval 1 to 72; that stretch reads MSKDDCIEFE…TKGRIIYRMK (72 aa).

This sequence belongs to the IF-1 family. Component of the 30S ribosomal translation pre-initiation complex which assembles on the 30S ribosome in the order IF-2 and IF-3, IF-1 and N-formylmethionyl-tRNA(fMet); mRNA recruitment can occur at any time during PIC assembly.

It localises to the cytoplasm. One of the essential components for the initiation of protein synthesis. Stabilizes the binding of IF-2 and IF-3 on the 30S subunit to which N-formylmethionyl-tRNA(fMet) subsequently binds. Helps modulate mRNA selection, yielding the 30S pre-initiation complex (PIC). Upon addition of the 50S ribosomal subunit IF-1, IF-2 and IF-3 are released leaving the mature 70S translation initiation complex. The sequence is that of Translation initiation factor IF-1 from Xylella fastidiosa (strain Temecula1 / ATCC 700964).